A 141-amino-acid polypeptide reads, in one-letter code: uncharacterized protein (141 aa).

The span at 1-39 (MNNNNNNNNNNNNNNNNNNNNNNNNNSYDSNHSSSSYTS) shows a compositional bias: low complexity. Residues 1-48 (MNNNNNNNNNNNNNNNNNNNNNNNNNSYDSNHSSSSYTSENQNREQQF) form a disordered region. The chain crosses the membrane as a helical span at residues 109–129 (FFCKIILVFICLVAIYSLVVI).

Its subcellular location is the membrane. This is an uncharacterized protein from Dictyostelium discoideum (Social amoeba).